Consider the following 360-residue polypeptide: Aminomethyltransferase (360 aa).

The protein belongs to the GcvT family. The glycine cleavage system is composed of four proteins: P, T, L and H.

The catalysed reaction is N(6)-[(R)-S(8)-aminomethyldihydrolipoyl]-L-lysyl-[protein] + (6S)-5,6,7,8-tetrahydrofolate = N(6)-[(R)-dihydrolipoyl]-L-lysyl-[protein] + (6R)-5,10-methylene-5,6,7,8-tetrahydrofolate + NH4(+). In terms of biological role, the glycine cleavage system catalyzes the degradation of glycine. The protein is Aminomethyltransferase of Methylococcus capsulatus (strain ATCC 33009 / NCIMB 11132 / Bath).